Reading from the N-terminus, the 347-residue chain is Cell shape-determining protein MreB (347 aa).

ATP is bound by residues 19-21 (TAN), 168-170 (GGT), 216-219 (ERIK), and 296-299 (GGAL).

This sequence belongs to the FtsA/MreB family. In terms of assembly, forms polymers.

It is found in the cytoplasm. Its function is as follows. Forms membrane-associated dynamic filaments that are essential for cell shape determination. Acts by regulating cell wall synthesis and cell elongation, and thus cell shape. A feedback loop between cell geometry and MreB localization may maintain elongated cell shape by targeting cell wall growth to regions of negative cell wall curvature. The sequence is that of Cell shape-determining protein MreB from Escherichia coli O6:H1 (strain CFT073 / ATCC 700928 / UPEC).